Consider the following 168-residue polypeptide: Urease accessory protein UreE (168 aa).

Residues 137–168 are disordered; that stretch reads PESGAYHGTTGHGGGHSHSHGHSHDHHHDHSH. Residues 151 to 161 are compositionally biased toward basic residues; sequence GHSHSHGHSHD.

Belongs to the UreE family.

The protein localises to the cytoplasm. In terms of biological role, involved in urease metallocenter assembly. Binds nickel. Probably functions as a nickel donor during metallocenter assembly. This Saccharophagus degradans (strain 2-40 / ATCC 43961 / DSM 17024) protein is Urease accessory protein UreE.